The primary structure comprises 318 residues: Galactinol synthase 1 (318 aa).

Residue K102 is part of the active site. 3 residues coordinate Mn(2+): D118, D120, and H244.

The protein belongs to the glycosyltransferase 8 family. Galactosyltransferase subfamily. It depends on a divalent metal cation as a cofactor. In terms of tissue distribution, expressed in seeds, mostly in radicle tips.

Its subcellular location is the cytoplasm. It carries out the reaction myo-inositol + UDP-alpha-D-galactose = alpha-D-galactosyl-(1-&gt;3)-1D-myo-inositol + UDP + H(+). Galactinol synthase involved in the biosynthesis of raffinose family oligosaccharides (RFOs) that function as osmoprotectants. May promote plant stress tolerance. The chain is Galactinol synthase 1 (GOLS1) from Solanum lycopersicum (Tomato).